We begin with the raw amino-acid sequence, 265 residues long: Mlc titration factor A (265 aa).

The Zn(2+) site is built by histidine 111, histidine 148, histidine 152, and glutamate 211.

Belongs to the MtfA family. Interacts with Mlc. The cofactor is Zn(2+).

The protein resides in the cytoplasm. Its function is as follows. Involved in the modulation of the activity of the glucose-phosphotransferase system (glucose-PTS). Interacts with the transcriptional repressor Mlc, preventing its interaction with DNA and leading to the modulation of expression of genes regulated by Mlc, including ptsG, which encodes the PTS system glucose-specific EIICB component. In terms of biological role, shows zinc-dependent metallopeptidase activity. The polypeptide is Mlc titration factor A (Shigella sonnei (strain Ss046)).